The following is a 337-amino-acid chain: Glutaminase-asparaginase (337 aa).

The region spanning 10 to 337 is the Asparaginase/glutaminase domain; sequence ANVVILATGG…KELQRIFWEY (328 aa). Threonine 20 functions as the Acyl-ester intermediate in the catalytic mechanism. Substrate is bound by residues serine 67 and 100–101; that span reads TD.

Belongs to the asparaginase 1 family. In terms of assembly, homotetramer.

The protein resides in the periplasm. It catalyses the reaction L-glutamine + H2O = L-glutamate + NH4(+). The catalysed reaction is L-asparagine + H2O = L-aspartate + NH4(+). The polypeptide is Glutaminase-asparaginase (ansB) (Pseudomonas sp. (strain ATCC 29598 / 7A)).